Consider the following 298-residue polypeptide: Bifunctional protein FolD (298 aa).

NADP(+)-binding positions include 167 to 169 (GRS), Ser-192, and Ile-233.

It belongs to the tetrahydrofolate dehydrogenase/cyclohydrolase family. Homodimer.

The catalysed reaction is (6R)-5,10-methylene-5,6,7,8-tetrahydrofolate + NADP(+) = (6R)-5,10-methenyltetrahydrofolate + NADPH. It catalyses the reaction (6R)-5,10-methenyltetrahydrofolate + H2O = (6R)-10-formyltetrahydrofolate + H(+). It functions in the pathway one-carbon metabolism; tetrahydrofolate interconversion. Its function is as follows. Catalyzes the oxidation of 5,10-methylenetetrahydrofolate to 5,10-methenyltetrahydrofolate and then the hydrolysis of 5,10-methenyltetrahydrofolate to 10-formyltetrahydrofolate. In Caulobacter sp. (strain K31), this protein is Bifunctional protein FolD.